Reading from the N-terminus, the 556-residue chain is Double-strand-break repair protein rad21-like protein 1 (556 aa).

Belongs to the rad21 family. In terms of assembly, component of some meiotic cohesin complex composed of the SMC1 (SMC1A or SMC1B) and SMC3 heterodimer attached via their hinge domain, RAD21L which link them, and STAG3.

Its subcellular location is the nucleus. The protein localises to the chromosome. Functionally, meiosis-specific component of some cohesin complex required during the initial steps of prophase I in male meiosis. Probably required during early meiosis in males for separation of sister chromatids and homologous chromosomes. Replaces RAD21 in premeiotic S phase (during early stages of prophase I), while RAD21 reappears in later stages of prophase I. Involved in synaptonemal complex assembly, synapsis initiation and crossover recombination between homologous chromosomes during prophase I. The protein is Double-strand-break repair protein rad21-like protein 1 (RAD21L1) of Homo sapiens (Human).